Reading from the N-terminus, the 255-residue chain is MRLTALPAFDDNYIWALVANDGRAVIVDPGQAAPVLEAAQREGFTPVAALLTHHHADHIGGVAELQQHFPALELYGPDDERMPSATRHVAHGDTVTALGIDFAVLEVPGHTRSHVAYVGDGHLFSGDTLFSLGCGRMFEGTPPQMFDALQRLASLPGETLVCCGHEYTLANAAFALHVDPTNAALQRRQQEAQAMRHAARPTLPISLKSELATNPFLRLHTPEIRAAAAAHASISITSDVDVFAELRRWKDAFRA.

Zn(2+) is bound by residues histidine 53, histidine 55, aspartate 57, histidine 58, histidine 110, aspartate 127, and histidine 165.

This sequence belongs to the metallo-beta-lactamase superfamily. Glyoxalase II family. In terms of assembly, monomer. Requires Zn(2+) as cofactor.

The enzyme catalyses an S-(2-hydroxyacyl)glutathione + H2O = a 2-hydroxy carboxylate + glutathione + H(+). The protein operates within secondary metabolite metabolism; methylglyoxal degradation; (R)-lactate from methylglyoxal: step 2/2. Its function is as follows. Thiolesterase that catalyzes the hydrolysis of S-D-lactoyl-glutathione to form glutathione and D-lactic acid. The sequence is that of Hydroxyacylglutathione hydrolase from Xanthomonas campestris pv. campestris (strain 8004).